Reading from the N-terminus, the 403-residue chain is MTVVREYDPTRDLVGVEDVERRCEVGPSGKLSLFTDLLGDPICRIRHSPSYLMLVAEMGTEKKEIVGMIRGCIKTVTCGQKLDLNHKSQNDVVKPLYTKLAYVLGLRVSPFHRRQGIGFKLVKMMEEWFRQNGAEYSYIATENDNQASVNLFTGKCGYSEFRTPSILVNPVYAHRVNVSRRVTVIKLEPVDAETLYRIRFSTTEFFPRDIDSVLNNKLSLGTFVAVPRGSCYGSGSGSWPGSAKFLEYPPESWAVLSVWNCKDSFLLEVRGASRLRRVVAKTTRVVDKTLPFLKLPSIPSVFEPFGLHFMYGIGGEGPRAVKMVKSLCAHAHNLAKAGGCGVVAAEVAGEDPLRRGIPHWKVLSCDEDLWCIKRLGDDYSDGVVGDWTKSPPGVSIFVDPREF.

In terms of domain architecture, N-acetyltransferase spans 2–177 (TVVREYDPTR…VNPVYAHRVN (176 aa)).

The protein belongs to the acetyltransferase family.

Ethylene-responsive N-acetyltransferase required for differential cell elongation in the hypocotyl. Regulates apical hook formation of dark-grown seedlings. May control differential cell growth by regulating auxin activity. May be involved in negative feedback regulation of auxin homeostasis through the control of GH3-like genes. Modulates de novo shoot organogenesis. The chain is Probable N-acetyltransferase HLS1 (HLS1) from Arabidopsis thaliana (Mouse-ear cress).